A 355-amino-acid chain; its full sequence is 3-dehydroquinate synthase (355 aa).

Residues 67-72, 101-105, 125-126, K138, K147, and 165-168 each bind NAD(+); these read DGEIYK, GVIGD, TT, and FLNT. Positions 180, 243, and 260 each coordinate Zn(2+).

Belongs to the sugar phosphate cyclases superfamily. Dehydroquinate synthase family. NAD(+) serves as cofactor. Co(2+) is required as a cofactor. The cofactor is Zn(2+).

The protein localises to the cytoplasm. It carries out the reaction 7-phospho-2-dehydro-3-deoxy-D-arabino-heptonate = 3-dehydroquinate + phosphate. The protein operates within metabolic intermediate biosynthesis; chorismate biosynthesis; chorismate from D-erythrose 4-phosphate and phosphoenolpyruvate: step 2/7. Catalyzes the conversion of 3-deoxy-D-arabino-heptulosonate 7-phosphate (DAHP) to dehydroquinate (DHQ). In Buchnera aphidicola subsp. Baizongia pistaciae (strain Bp), this protein is 3-dehydroquinate synthase.